Here is a 450-residue protein sequence, read N- to C-terminus: Tubulin beta-3 chain (450 aa).

An MREI motif motif is present at residues 1–4 (MREI). Residues glutamine 11, glutamate 69, serine 138, glycine 142, threonine 143, and glycine 144 each contribute to the GTP site. Residue glutamate 69 coordinates Mg(2+). Serine 172 bears the Phosphoserine; by CDK1 mark. Positions 204 and 226 each coordinate GTP. Positions 422 to 450 (YQQYQDATAEEEGEMYEDDDEESEAQGPK) are disordered. The span at 429–450 (TAEEEGEMYEDDDEESEAQGPK) shows a compositional bias: acidic residues. Glutamate 438 carries the 5-glutamyl polyglutamate modification. Serine 444 carries the phosphoserine modification.

This sequence belongs to the tubulin family. In terms of assembly, heterodimer of alpha- and beta-tubulin. A typical microtubule is a hollow water-filled tube with an outer diameter of 25 nm and an inner diameter of 15 nM. Alpha-beta heterodimers associate head-to-tail to form protofilaments running lengthwise along the microtubule wall with the beta-tubulin subunit facing the microtubule plus end conferring a structural polarity. Microtubules usually have 13 protofilaments but different protofilament numbers can be found in some organisms and specialized cells. Interacts with gamma-tubulin; the interaction allows microtubules to nucleate from the gamma-tubulin ring complex (gTuRC). Interacts with UNC5C (via cytoplasmic domain); this interaction is decreased by NTN1/Netrin-1. Interacts with NLRP5/MATER at cytoskeleton microtubules. Interacts with DPYSL5. Interacts with CFAP61. Requires Mg(2+) as cofactor. Post-translationally, some glutamate residues at the C-terminus are polyglycylated, resulting in polyglycine chains on the gamma-carboxyl group. Glycylation is mainly limited to tubulin incorporated into axonemes (cilia and flagella) whereas glutamylation is prevalent in neuronal cells, centrioles, axonemes, and the mitotic spindle. Both modifications can coexist on the same protein on adjacent residues, and lowering polyglycylation levels increases polyglutamylation, and reciprocally. Cilia and flagella glycylation is required for their stability and maintenance. Flagella glycylation controls sperm motility. In terms of processing, some glutamate residues at the C-terminus are polyglutamylated, resulting in polyglutamate chains on the gamma-carboxyl group. Polyglutamylation plays a key role in microtubule severing by spastin (SPAST). SPAST preferentially recognizes and acts on microtubules decorated with short polyglutamate tails: severing activity by SPAST increases as the number of glutamates per tubulin rises from one to eight, but decreases beyond this glutamylation threshold. Glutamylation is also involved in cilia motility. Phosphorylated on Ser-172 by CDK1 during the cell cycle, from metaphase to telophase, but not in interphase. This phosphorylation inhibits tubulin incorporation into microtubules.

It is found in the cytoplasm. It localises to the cytoskeleton. The protein localises to the cell projection. Its subcellular location is the growth cone. The protein resides in the lamellipodium. It is found in the filopodium. In terms of biological role, tubulin is the major constituent of microtubules, protein filaments consisting of alpha- and beta-tubulin heterodimers. Microtubules grow by the addition of GTP-tubulin dimers to the microtubule end, where a stabilizing cap forms. Below the cap, alpha-beta tubulin heterodimers are in GDP-bound state, owing to GTPase activity of alpha-tubulin. TUBB3 plays a critical role in proper axon guidance and maintenance. Binding of NTN1/Netrin-1 to its receptor UNC5C might cause dissociation of UNC5C from polymerized TUBB3 in microtubules and thereby lead to increased microtubule dynamics and axon repulsion. Plays a role in dorsal root ganglion axon projection towards the spinal cord. The protein is Tubulin beta-3 chain (Tubb3) of Rattus norvegicus (Rat).